The sequence spans 206 residues: Guanylate kinase (206 aa).

Positions 6 to 184 constitute a Guanylate kinase-like domain; it reads GTLYIISAPS…ALGDLKAIFR (179 aa). 13 to 20 is an ATP binding site; it reads APSGAGKS.

This sequence belongs to the guanylate kinase family.

The protein resides in the cytoplasm. The enzyme catalyses GMP + ATP = GDP + ADP. Functionally, essential for recycling GMP and indirectly, cGMP. The polypeptide is Guanylate kinase (Pseudomonas fluorescens (strain ATCC BAA-477 / NRRL B-23932 / Pf-5)).